A 772-amino-acid chain; its full sequence is Endoplasmic reticulum membrane sensor NFE2L1 (772 aa).

A helical; Signal-anchor for type II membrane protein membrane pass occupies residues 7–24 (YLTEGLLQFTILLSLIGV). The interval 108-148 (DPEGSVSGSQPNSGLALESSSGLQDVTGPDNGVRESETEQG) is disordered. A compositionally biased stretch (polar residues) spans 113-131 (VSGSQPNSGLALESSSGLQ). Residues 191–199 (VFDYSHRQK) form a cholesterol recognition/amino acid consensus (CRAC) region region. An N-linked (GlcNAc...) asparagine glycan is attached at N348. Residues 379 to 383 (SPEVE) are CPD. 2 N-linked (GlcNAc...) asparagine glycosylation sites follow: N412 and N423. Residues 470 to 532 (EEEFDSDSGL…AVGYSSDSET (63 aa)) are disordered. The short motif at 476-480 (DSGLS) is the Destruction motif element. Positions 476–523 (DSGLSLDSSHSPSSLSSSEGSSSSSSSSSSSSSSASSSASSSFSEEGA) are enriched in low complexity. The residue at position 528 (S528) is a Phosphoserine; by CK2. S599 carries the post-translational modification Phosphoserine; by PKA. One can recognise a bZIP domain in the interval 654–717 (LIRDIRRRGK…RQMKQKVQSL (64 aa)). Residues 656–675 (RDIRRRGKNKMAAQNCRKRK) form a basic motif region. The interval 682–696 (LERDVEDLQRDKARL) is leucine-zipper. Residues 753–772 (RTMADQQARRQERKPKDRRK) are disordered. The Nuclear localization signal signature appears at 761–768 (RRQERKPK). Residues 763-772 (QERKPKDRRK) are compositionally biased toward basic residues.

The protein belongs to the bZIP family. CNC subfamily. In terms of assembly, interacts with KEAP1. Interacts (via CPD region) with FBXW7; leading to its ubiquitination and degradation. Interacts with SYVN1/HRD1; leading to its ubiquitination and degradation. Interacts (when ubiquitinated) with DDI2; leading to its cleavage. As to quaternary structure, interacts (via the bZIP domain) with small MAF protein (MAFF, MAFG or MAFK); required for binding to antioxidant response elements (AREs) on DNA. Interacts (via Destruction motif) with BTRC; leading to its ubiquitination and degradation. Interacts with CEBPB; the heterodimer represses expression of DSPP during odontoblast differentiation. Interacts with MOTS-c, a peptide produced by the mitochondrially encoded 12S rRNA MT-RNR1. Post-translationally, cleaved at Leu-104 by the aspartyl protease DDI2 following retrotranslocation, releasing the protein from the endoplasmic reticulum membrane and forming the transcription factor NRF1 that translocates into the nucleus. Ubiquitination is prerequisite for cleavage by aspartyl protease DDI2. In terms of processing, N-glycosylated in normal conditions, when it has a single-pass type II membrane protein topology, with the DNA-binding domain facing the endoplasmic reticulum lumen. Deglycosylated during retrotranslocation to the cytosolic side of the membrane, to have a single-pass type III membrane protein topology with the major part of the protein facing the cytosol. Ubiquitinated by the SCF(FBXW7) complex and SYVN1/HRD1, leading to its degradation by the proteasome. Ubiquitinated during retrotranslocation to the cytosolic side of the membrane: ubiquitination does not lead to degradation and is required for processing by the aspartyl protease DDI2 and subsequent release from the endoplasmic reticulum membrane. Post-translationally, phosphorylation by CK2 at Ser-528 inhibits transcription factor activity, possibly by affecting DNA-binding activity. Phosphorylation at Ser-599 is required for interaction with CEBPB. In terms of processing, ubiquitinated by the SCF(BTRC) complex in the nucleus, leading to its degradation by the proteasome.

Its subcellular location is the endoplasmic reticulum membrane. It is found in the nucleus. Its function is as follows. Endoplasmic reticulum membrane sensor that translocates into the nucleus in response to various stresses to act as a transcription factor. Constitutes a precursor of the transcription factor NRF1. Able to detect various cellular stresses, such as cholesterol excess, oxidative stress or proteasome inhibition. In response to stress, it is released from the endoplasmic reticulum membrane following cleavage by the protease DDI2 and translocates into the nucleus to form the transcription factor NRF1. Acts as a key sensor of cholesterol excess: in excess cholesterol conditions, the endoplasmic reticulum membrane form of the protein directly binds cholesterol via its CRAC motif, preventing cleavage and release of the transcription factor NRF1, thereby allowing expression of genes promoting cholesterol removal, such as CD36. Involved in proteasome homeostasis: in response to proteasome inhibition, it is released from the endoplasmic reticulum membrane, translocates to the nucleus and activates expression of genes encoding proteasome subunits. In terms of biological role, CNC-type bZIP family transcription factor that translocates to the nucleus and regulates expression of target genes in response to various stresses. Heterodimerizes with small-Maf proteins (MAFF, MAFG or MAFK) and binds DNA motifs including the antioxidant response elements (AREs), which regulate expression of genes involved in oxidative stress response. Activates or represses expression of target genes, depending on the context. Plays a key role in cholesterol homeostasis by acting as a sensor of cholesterol excess: in low cholesterol conditions, translocates into the nucleus and represses expression of genes involved in defense against cholesterol excess, such as CD36. In excess cholesterol conditions, the endoplasmic reticulum membrane form of the protein directly binds cholesterol via its CRAC motif, preventing cleavage and release of the transcription factor NRF1, thereby allowing expression of genes promoting cholesterol removal. Critical for redox balance in response to oxidative stress: acts by binding the AREs motifs on promoters and mediating activation of oxidative stress response genes, such as GCLC, GCLM, GSS, MT1 and MT2. Plays an essential role during fetal liver hematopoiesis: probably has a protective function against oxidative stress and is involved in lipid homeostasis in the liver. Involved in proteasome homeostasis: in response to proteasome inhibition, mediates the 'bounce-back' of proteasome subunits by translocating into the nucleus and activating expression of genes encoding proteasome subunits. Also involved in regulating glucose flux. Together with CEBPB; represses expression of DSPP during odontoblast differentiation. In response to ascorbic acid induction, activates expression of SP7/Osterix in osteoblasts. In Pongo abelii (Sumatran orangutan), this protein is Endoplasmic reticulum membrane sensor NFE2L1.